Consider the following 469-residue polypeptide: UDP-N-acetylmuramoylalanine--D-glutamate ligase (469 aa).

125–131 (GTNGKTT) contributes to the ATP binding site.

Belongs to the MurCDEF family.

Its subcellular location is the cytoplasm. It carries out the reaction UDP-N-acetyl-alpha-D-muramoyl-L-alanine + D-glutamate + ATP = UDP-N-acetyl-alpha-D-muramoyl-L-alanyl-D-glutamate + ADP + phosphate + H(+). The protein operates within cell wall biogenesis; peptidoglycan biosynthesis. Cell wall formation. Catalyzes the addition of glutamate to the nucleotide precursor UDP-N-acetylmuramoyl-L-alanine (UMA). In Prochlorococcus marinus (strain NATL2A), this protein is UDP-N-acetylmuramoylalanine--D-glutamate ligase.